The primary structure comprises 363 residues: Phosphate acyltransferase (363 aa).

The disordered stretch occupies residues 326–363 (ADSHPSKVNAGENAPPLASASNPSPEALPVGSLDRVEG). The segment covering 337 to 354 (ENAPPLASASNPSPEALP) has biased composition (low complexity).

This sequence belongs to the PlsX family. In terms of assembly, homodimer. Probably interacts with PlsY.

It localises to the cytoplasm. It carries out the reaction a fatty acyl-[ACP] + phosphate = an acyl phosphate + holo-[ACP]. The protein operates within lipid metabolism; phospholipid metabolism. In terms of biological role, catalyzes the reversible formation of acyl-phosphate (acyl-PO(4)) from acyl-[acyl-carrier-protein] (acyl-ACP). This enzyme utilizes acyl-ACP as fatty acyl donor, but not acyl-CoA. This Synechococcus sp. (strain JA-3-3Ab) (Cyanobacteria bacterium Yellowstone A-Prime) protein is Phosphate acyltransferase.